The sequence spans 193 residues: Potassium-transporting ATPase KdpC subunit (193 aa).

Residues 7-27 (PLVVLFVVLNAVTGLAYPAVM) form a helical membrane-spanning segment.

This sequence belongs to the KdpC family. As to quaternary structure, the system is composed of three essential subunits: KdpA, KdpB and KdpC.

Its subcellular location is the cell inner membrane. Part of the high-affinity ATP-driven potassium transport (or Kdp) system, which catalyzes the hydrolysis of ATP coupled with the electrogenic transport of potassium into the cytoplasm. This subunit acts as a catalytic chaperone that increases the ATP-binding affinity of the ATP-hydrolyzing subunit KdpB by the formation of a transient KdpB/KdpC/ATP ternary complex. This Burkholderia cenocepacia (strain HI2424) protein is Potassium-transporting ATPase KdpC subunit.